Here is a 208-residue protein sequence, read N- to C-terminus: uncharacterized protein (208 aa).

The next 6 helical transmembrane spans lie at 5-25 (VIGI…KEAW), 41-61 (MLLI…IAAL), 69-89 (ANGI…LFFL), 123-143 (VLLG…ICGL), 150-170 (VFFF…TIAG), and 176-196 (NKLL…LVIY).

The protein localises to the cell membrane. This is an uncharacterized protein from Bacillus subtilis (strain 168).